The chain runs to 104 residues: Nucleoid-associated protein EF_2780 (104 aa).

It belongs to the YbaB/EbfC family. As to quaternary structure, homodimer.

The protein localises to the cytoplasm. It localises to the nucleoid. Functionally, binds to DNA and alters its conformation. May be involved in regulation of gene expression, nucleoid organization and DNA protection. The chain is Nucleoid-associated protein EF_2780 from Enterococcus faecalis (strain ATCC 700802 / V583).